The following is a 432-amino-acid chain: Adenylosuccinate synthetase (432 aa).

Residues 12–18 (GDEGKGK) and 40–42 (GHT) each bind GTP. Asp13 (proton acceptor) is an active-site residue. Mg(2+) is bound by residues Asp13 and Gly40. IMP is bound by residues 13 to 16 (DEGK), 38 to 41 (NAGH), Thr132, Arg146, Gln226, Thr241, and Arg305. His41 functions as the Proton donor in the catalytic mechanism. 301–307 (VVTGRKR) is a substrate binding site. Residues Arg307, 333–335 (KLD), and 415–417 (STS) each bind GTP.

The protein belongs to the adenylosuccinate synthetase family. As to quaternary structure, homodimer. Mg(2+) serves as cofactor.

The protein localises to the cytoplasm. It catalyses the reaction IMP + L-aspartate + GTP = N(6)-(1,2-dicarboxyethyl)-AMP + GDP + phosphate + 2 H(+). The protein operates within purine metabolism; AMP biosynthesis via de novo pathway; AMP from IMP: step 1/2. Its function is as follows. Plays an important role in the de novo pathway of purine nucleotide biosynthesis. Catalyzes the first committed step in the biosynthesis of AMP from IMP. In Mesorhizobium japonicum (strain LMG 29417 / CECT 9101 / MAFF 303099) (Mesorhizobium loti (strain MAFF 303099)), this protein is Adenylosuccinate synthetase.